The following is a 37-amino-acid chain: Large ribosomal subunit protein bL36 (37 aa).

The protein belongs to the bacterial ribosomal protein bL36 family.

The protein is Large ribosomal subunit protein bL36 of Acetivibrio thermocellus (strain ATCC 27405 / DSM 1237 / JCM 9322 / NBRC 103400 / NCIMB 10682 / NRRL B-4536 / VPI 7372) (Clostridium thermocellum).